Here is a 437-residue protein sequence, read N- to C-terminus: Transcription factor E2F2 (437 aa).

The interval 65–105 (ATPHGPEGQVVRCLPAGRLPAKRKLDLEGIGRPVVPEFPTP) is cyclin A/CDK2 binding. The DNA-binding element occupies 107–196 (GKCIRVDGLP…KNNIQWVGRG (90 aa)). The interval 155 to 176 (LNWAAEVLDVQKRRIYDITNVL) is leucine-zipper. The short motif at 160-196 (EVLDVQKRRIYDITNVLEGIQLIRKKAKNNIQWVGRG) is the DEF box element. The segment at 197-289 (MFEDPTRPGK…PDRTEDNLQI (93 aa)) is dimerization. The tract at residues 307–368 (VQEPDSPSEE…APPPPSLVPL (62 aa)) is disordered. Over residues 315-330 (EEPLPSTSTLCPSPDS) the composition is skewed to low complexity. A compositionally biased stretch (pro residues) spans 351-365 (APAPTPQQAPPPPSL). The segment at 359–437 (APPPPSLVPL…SYDLGDLLIN (79 aa)) is transactivation. The interval 410–427 (DDYLWGLEAGEGISDLFD) is retinoblastoma protein binding.

It belongs to the E2F/DP family. In terms of assembly, component of the DRTF1/E2F transcription factor complex. Forms heterodimers with DP family members. The E2F2 complex binds specifically hypophosphorylated retinoblastoma protein RB1. During the cell cycle, RB1 becomes phosphorylated in mid-to-late G1 phase, detaches from the DRTF1/E2F complex, rendering E2F transcriptionally active. Viral oncoproteins, notably E1A, T-antigen and HPV E7, are capable of sequestering RB1, thus releasing the active complex. Binds EAPP. Post-translationally, phosphorylated by CDK2 and cyclin A-CDK2 in the S-phase. Highest level of expression is found in placenta, low levels are found in lung. Found as well in many immortalized cell lines derived from tumor samples.

The protein localises to the nucleus. In terms of biological role, transcription activator that binds DNA cooperatively with DP proteins through the E2 recognition site, 5'-TTTC[CG]CGC-3' found in the promoter region of a number of genes whose products are involved in cell cycle regulation or in DNA replication. The DRTF1/E2F complex functions in the control of cell-cycle progression from g1 to s phase. E2F2 binds specifically to RB1 in a cell-cycle dependent manner. The protein is Transcription factor E2F2 (E2F2) of Homo sapiens (Human).